A 151-amino-acid chain; its full sequence is Sec-independent protein translocase protein TatB (151 aa).

A helical transmembrane segment spans residues M1–G21. Residues N120–E131 show a composition bias toward low complexity. The interval N120–A151 is disordered. Over residues Q132–L142 the composition is skewed to polar residues.

This sequence belongs to the TatB family. As to quaternary structure, the Tat system comprises two distinct complexes: a TatABC complex, containing multiple copies of TatA, TatB and TatC subunits, and a separate TatA complex, containing only TatA subunits. Substrates initially bind to the TatABC complex, which probably triggers association of the separate TatA complex to form the active translocon.

Its subcellular location is the cell inner membrane. Functionally, part of the twin-arginine translocation (Tat) system that transports large folded proteins containing a characteristic twin-arginine motif in their signal peptide across membranes. Together with TatC, TatB is part of a receptor directly interacting with Tat signal peptides. TatB may form an oligomeric binding site that transiently accommodates folded Tat precursor proteins before their translocation. This is Sec-independent protein translocase protein TatB from Campylobacter fetus subsp. fetus (strain 82-40).